A 967-amino-acid polypeptide reads, in one-letter code: Leucine--tRNA ligase (967 aa).

Positions 43–53 match the 'HIGH' region motif; sequence PYLSGHLHVGH. A 'KMSKS' region motif is present at residues 650 to 654; that stretch reads KMSKS. Lysine 653 contacts ATP.

This sequence belongs to the class-I aminoacyl-tRNA synthetase family.

Its subcellular location is the cytoplasm. It carries out the reaction tRNA(Leu) + L-leucine + ATP = L-leucyl-tRNA(Leu) + AMP + diphosphate. In Thermococcus kodakarensis (strain ATCC BAA-918 / JCM 12380 / KOD1) (Pyrococcus kodakaraensis (strain KOD1)), this protein is Leucine--tRNA ligase.